The sequence spans 227 residues: Cytochrome c oxidase subunit 2 (227 aa).

The Mitochondrial intermembrane portion of the chain corresponds to M1–S14. Residues P15–M45 traverse the membrane as a helical segment. Residues L46 to Q59 are Mitochondrial matrix-facing. A helical membrane pass occupies residues E60–M87. Topologically, residues D88–L227 are mitochondrial intermembrane. Cu cation contacts are provided by H161, C196, E198, C200, H204, and M207. Mg(2+) is bound at residue E198.

Belongs to the cytochrome c oxidase subunit 2 family. As to quaternary structure, component of the cytochrome c oxidase (complex IV, CIV), a multisubunit enzyme composed of 14 subunits. The complex is composed of a catalytic core of 3 subunits MT-CO1, MT-CO2 and MT-CO3, encoded in the mitochondrial DNA, and 11 supernumerary subunits COX4I, COX5A, COX5B, COX6A, COX6B, COX6C, COX7A, COX7B, COX7C, COX8 and NDUFA4, which are encoded in the nuclear genome. The complex exists as a monomer or a dimer and forms supercomplexes (SCs) in the inner mitochondrial membrane with NADH-ubiquinone oxidoreductase (complex I, CI) and ubiquinol-cytochrome c oxidoreductase (cytochrome b-c1 complex, complex III, CIII), resulting in different assemblies (supercomplex SCI(1)III(2)IV(1) and megacomplex MCI(2)III(2)IV(2)). Found in a complex with TMEM177, COA6, COX18, COX20, SCO1 and SCO2. Interacts with TMEM177 in a COX20-dependent manner. Interacts with COX20. Interacts with COX16. It depends on Cu cation as a cofactor.

The protein resides in the mitochondrion inner membrane. It catalyses the reaction 4 Fe(II)-[cytochrome c] + O2 + 8 H(+)(in) = 4 Fe(III)-[cytochrome c] + 2 H2O + 4 H(+)(out). Functionally, component of the cytochrome c oxidase, the last enzyme in the mitochondrial electron transport chain which drives oxidative phosphorylation. The respiratory chain contains 3 multisubunit complexes succinate dehydrogenase (complex II, CII), ubiquinol-cytochrome c oxidoreductase (cytochrome b-c1 complex, complex III, CIII) and cytochrome c oxidase (complex IV, CIV), that cooperate to transfer electrons derived from NADH and succinate to molecular oxygen, creating an electrochemical gradient over the inner membrane that drives transmembrane transport and the ATP synthase. Cytochrome c oxidase is the component of the respiratory chain that catalyzes the reduction of oxygen to water. Electrons originating from reduced cytochrome c in the intermembrane space (IMS) are transferred via the dinuclear copper A center (CU(A)) of subunit 2 and heme A of subunit 1 to the active site in subunit 1, a binuclear center (BNC) formed by heme A3 and copper B (CU(B)). The BNC reduces molecular oxygen to 2 water molecules using 4 electrons from cytochrome c in the IMS and 4 protons from the mitochondrial matrix. The chain is Cytochrome c oxidase subunit 2 (MT-CO2) from Cheirogaleus medius (Fat-tailed dwarf lemur).